Here is a 458-residue protein sequence, read N- to C-terminus: MIKEYRTIKEVVGPLMAVEKVSGVKYEELIEVRMQNGEIRRGQVLEVQEDKAMVQIFEGTSGINLKNSSVRFLGHPLQLGVSEDMIGRVFDGLGRPKDNGPEILPEKYLDINGEVINPIARDYPDEFIQTGISAIDHLNTLVRGQKLPVFSGSGLPHKELAAQIARQATVLDSSDDFAVVFAAIGITFEEAEFFMEDFRQTGAIDRSVMFMNLANDPAIERIATPRMALTAAEYLAYEKGMHVLVIMTDMTNYAEALREISAARREVPGRRGYPGYLYTNLATLFERAGRIRGLKGSVTQIPILTMPEDDKTHPIPDLTGYITEGQIILTRELYKSGIQPPIDVLPSLSRLKDKGTGAGKTREDHAATMNQLFAAYAQGKQAKELAVVLGESALSDIDKIYAKFAERFENEYVNQGFYTNRTITETLDLGWELLAMLPRTELKRIKDDLLDKYLPEGK.

It belongs to the ATPase alpha/beta chains family.

Its function is as follows. Involved in ATP-driven sodium extrusion. The sequence is that of V-type sodium ATPase subunit B (ntpB) from Enterococcus hirae (strain ATCC 9790 / DSM 20160 / JCM 8729 / LMG 6399 / NBRC 3181 / NCIMB 6459 / NCDO 1258 / NCTC 12367 / WDCM 00089 / R).